The primary structure comprises 317 residues: Ribosomal protein L11 methyltransferase (317 aa).

S-adenosyl-L-methionine-binding residues include Thr-158, Gly-179, Asp-201, and Asn-244.

This sequence belongs to the methyltransferase superfamily. PrmA family.

It localises to the cytoplasm. It catalyses the reaction L-lysyl-[protein] + 3 S-adenosyl-L-methionine = N(6),N(6),N(6)-trimethyl-L-lysyl-[protein] + 3 S-adenosyl-L-homocysteine + 3 H(+). Methylates ribosomal protein L11. This Lactococcus lactis subsp. lactis (strain IL1403) (Streptococcus lactis) protein is Ribosomal protein L11 methyltransferase.